Here is a 59-residue protein sequence, read N- to C-terminus: Potassium channel toxin alpha-KTx 1.12 (59 aa).

Positions 1 to 22 (MKILSVLLLALIICSIVGWSEA) are cleaved as a signal peptide. Gln23 bears the Pyrrolidone carboxylic acid mark. Intrachain disulfides connect Cys29–Cys50, Cys35–Cys55, and Cys39–Cys57. An interaction with Ca(2+)-activated K(+) channels region spans residues 48 to 55 (GKCMNKKC).

This sequence belongs to the short scorpion toxin superfamily. Potassium channel inhibitor family. Alpha-KTx 01 subfamily. Expressed by the venom gland.

It localises to the secreted. Potent selective inhibitor of high conductance (maxi-K), different medium and small conductance calcium-activated potassium channels (KCa1.1/KCNMA1 and others), as well as a voltage-dependent potassium channel (Kv1.3/KCNA3&gt;Kv1.2/KCNA2&gt;Kv1.6/KCNA3&gt;&gt;Shaker/Sh). It blocks channel activity by a simple bimolecular inhibition process. In terms of biological role, has a pH-specific antimicrobial activity against bacteria (B.subtilis, E.coli and S.aureus) and the fungus C.albicans. The chain is Potassium channel toxin alpha-KTx 1.12 from Leiurus hebraeus (Hebrew deathstalker scorpion).